Consider the following 129-residue polypeptide: ATP synthase epsilon chain (129 aa).

It belongs to the ATPase epsilon chain family. In terms of assembly, F-type ATPases have 2 components, CF(1) - the catalytic core - and CF(0) - the membrane proton channel. CF(1) has five subunits: alpha(3), beta(3), gamma(1), delta(1), epsilon(1). CF(0) has three main subunits: a, b and c.

The protein resides in the cell inner membrane. Functionally, produces ATP from ADP in the presence of a proton gradient across the membrane. The sequence is that of ATP synthase epsilon chain from Campylobacter fetus subsp. fetus (strain 82-40).